The following is a 99-amino-acid chain: Antitoxin VapB47 (99 aa).

Belongs to the phD/YefM antitoxin family.

Antitoxin component of a type II toxin-antitoxin (TA) system. This Mycobacterium tuberculosis (strain CDC 1551 / Oshkosh) protein is Antitoxin VapB47 (vapB47).